A 153-amino-acid chain; its full sequence is Pheromone-binding protein Gp-9 (153 aa).

An N-terminal signal peptide occupies residues 1–19 (MKTFVLHIFIFAFVAFASA). 3 cysteine pairs are disulfide-bonded: Cys-37-Cys-77, Cys-73-Cys-129, and Cys-118-Cys-138.

This sequence belongs to the PBP/GOBP family. In terms of assembly, homodimer.

It localises to the secreted. Its function is as follows. Colony queen number, a major feature of social organization, is associated with worker genotype for Gp-9. Colonies are headed by either a single reproductive queen (monogyne form) or multiple queens (polygyne form). Differences in worker Gp-9 genotypes between social forms may cause differences in workers' abilities to recognize queens and regulate their numbers. This is Pheromone-binding protein Gp-9 from Solenopsis geminata (Tropical fire ant).